A 116-amino-acid polypeptide reads, in one-letter code: Large ribosomal subunit protein bL17 (116 aa).

Belongs to the bacterial ribosomal protein bL17 family. In terms of assembly, part of the 50S ribosomal subunit. Contacts protein L32.

The polypeptide is Large ribosomal subunit protein bL17 (Prochlorococcus marinus (strain MIT 9301)).